The following is a 154-amino-acid chain: uncharacterized protein (154 aa).

Helical transmembrane passes span F20 to G42, F62 to L84, A91 to Y109, and I113 to M132.

Its subcellular location is the cell membrane. This is an uncharacterized protein from Bacillus subtilis (strain 168).